The following is a 374-amino-acid chain: Anhydro-N-acetylmuramic acid kinase (374 aa).

ATP is bound at residue 15 to 22 (GTSADGID).

The protein belongs to the anhydro-N-acetylmuramic acid kinase family.

It carries out the reaction 1,6-anhydro-N-acetyl-beta-muramate + ATP + H2O = N-acetyl-D-muramate 6-phosphate + ADP + H(+). Its pathway is amino-sugar metabolism; 1,6-anhydro-N-acetylmuramate degradation. It participates in cell wall biogenesis; peptidoglycan recycling. Functionally, catalyzes the specific phosphorylation of 1,6-anhydro-N-acetylmuramic acid (anhMurNAc) with the simultaneous cleavage of the 1,6-anhydro ring, generating MurNAc-6-P. Is required for the utilization of anhMurNAc either imported from the medium or derived from its own cell wall murein, and thus plays a role in cell wall recycling. This Xanthomonas axonopodis pv. citri (strain 306) protein is Anhydro-N-acetylmuramic acid kinase.